The following is a 626-amino-acid chain: DNA (cytosine-5)-methyltransferase DRM2 (626 aa).

UBA domains follow at residues G59 to Y101 and S109 to C150. Residues V160 to K187 show a composition bias toward acidic residues. Disordered regions lie at residues V160 to S196 and T245 to M282. The UBA 3 domain occupies N190 to C232. Positions E262–I276 are enriched in basic and acidic residues. The SAM-dependent MTase DRM-type domain maps to T295–S626.

This sequence belongs to the class I-like SAM-binding methyltransferase superfamily. DRM-methyltransferase family. As to quaternary structure, interacts with RDM1. Expressed in roots, inflorescences and at lower levels in leaves.

Its subcellular location is the nucleus. It is found in the nucleoplasm. It carries out the reaction a 2'-deoxycytidine in DNA + S-adenosyl-L-methionine = a 5-methyl-2'-deoxycytidine in DNA + S-adenosyl-L-homocysteine + H(+). Functionally, involved in de novo DNA methylation. Controls asymmetric and CpNpG methylation. Required for FWA gene silencing but not for the maintenance of SUP gene silencing. Functionally redundant to CMT3 to maintain non-CpG methylation. Involved in RNA-directed DNA methylation (RdDM). Acts as major DNA methyltransferase in the RdDM pathway, and is essential for RNA-directed de novo DNA methylation of cytosines in all sequence contexts. Associates with long non-coding RNA (lncRNA) produced by RNA polymerase V (Pol V). This association is dependent on AGO4 and IDN2, and results in DNA methylation of RdDM target loci. The polypeptide is DNA (cytosine-5)-methyltransferase DRM2 (DRM2) (Arabidopsis thaliana (Mouse-ear cress)).